The following is a 340-amino-acid chain: Sesquiterpene synthase 6 (340 aa).

Residues Asp-90, Asn-229, Ser-233, and Glu-237 each contribute to the Mg(2+) site. The short motif at 90 to 94 is the DDXXD motif element; that stretch reads DDITD. The short motif at 229 to 237 is the NSE/DTE motif element; it reads NDIYSFNNE. Arg-316 and Tyr-317 together coordinate (2E,6E)-farnesyl diphosphate.

This sequence belongs to the terpene synthase family. Mg(2+) serves as cofactor.

It catalyses the reaction (2E,6E)-farnesyl diphosphate = delta-cadinene + diphosphate. The catalysed reaction is (2E,6E)-farnesyl diphosphate = bicyclogermacrene + diphosphate. In terms of biological role, terpene cyclase that catalyzes the cyclization of farnesyl diphosphate (FPP) to various sesquiterpenes, including bicycloelemene, alpha-gurjunene, 9-epi-caryophylene, bicyclosesquiphellandrene, bicyclogermacrene and delta-cadinene. This is Sesquiterpene synthase 6 from Postia placenta (strain ATCC 44394 / Madison 698-R) (Brown rot fungus).